A 628-amino-acid chain; its full sequence is Leucine-rich repeat and fibronectin type-III domain-containing protein 3 (628 aa).

The first 16 residues, 1-16 (MAVLPLLLCLLPLAPA), serve as a signal peptide directing secretion. Residues 17–540 (SSPPQPASPS…APHAPFLGGT (524 aa)) lie on the Extracellular side of the membrane. The region spanning 19 to 59 (PPQPASPSPCPRRCRCQTQSLPLSVLCPGAGLLFVPPSLDR) is the LRRNT domain. LRR repeat units lie at residues 60–83 (RAAE…ANMT), 84–105 (GLLH…AFSD), 108–129 (ALRA…QLRG), 132–153 (NLRH…ALDD), 157–178 (TLED…ALGR), 181–202 (NVNT…AFSR), and 205–226 (KLAR…PLFS). Residues 249 to 295 (NPLHCNCELVWLRRLAREDDLEACASPPALGGRYFWAVGEEEFVCEP) enclose the LRRCT domain. Residues 295 to 382 (PPVVTHRSPP…GEATAAVELT (88 aa)) form the Ig-like domain. A disulfide bridge connects residues C317 and C366. 2 N-linked (GlcNAc...) asparagine glycosylation sites follow: N348 and N393. The tract at residues 380-433 (ELTVGPPPPPQLANSTSCDPPRDGEPDALTPPSAASASASAKAAEAGPPTDRGV) is disordered. Positions 410-428 (PPSAASASASAKAAEAGPP) are enriched in low complexity. The Fibronectin type-III domain occupies 427 to 525 (PPTDRGVQVT…GCNRFSTEPA (99 aa)). Residues 541-561 (MIIALGGVIVASVLVFIFVLL) form a helical membrane-spanning segment. At 562–628 (MRYKVHGGQP…WGPSHEPMGP (67 aa)) the chain is on the cytoplasmic side. Residues 570 to 609 (QPPGKTKASAPVSSVCSQTNGALGPMPAPPAPEPSAPRAH) form a disordered region. The span at 580–590 (PVSSVCSQTNG) shows a compositional bias: polar residues. The segment covering 595–604 (MPAPPAPEPS) has biased composition (pro residues).

Belongs to the LRFN family. In terms of assembly, can form heteromeric complexes with LRFN1, LRFN2, LRFN4 and LRFN5. Able to form homomeric complexes across cell junctions, between adjacent cells. Does not interact with DLG4. N-glycosylated.

The protein localises to the cell membrane. The protein resides in the cell projection. It is found in the axon. It localises to the dendrite. Its subcellular location is the synapse. The protein localises to the presynaptic cell membrane. The protein resides in the postsynaptic cell membrane. In terms of biological role, cell adhesion molecule that mediates homophilic cell-cell adhesion in a Ca(2+)-independent manner. Promotes neurite outgrowth in hippocampal neurons. This chain is Leucine-rich repeat and fibronectin type-III domain-containing protein 3 (LRFN3), found in Bos taurus (Bovine).